Consider the following 322-residue polypeptide: Beta-ketoacyl-[acyl-carrier-protein] synthase III (322 aa).

Residues cysteine 113 and histidine 249 contribute to the active site. The tract at residues 250-254 is ACP-binding; that stretch reads QANVR. The active site involves asparagine 279.

It belongs to the thiolase-like superfamily. FabH family. In terms of assembly, homodimer.

It is found in the cytoplasm. The enzyme catalyses malonyl-[ACP] + acetyl-CoA + H(+) = 3-oxobutanoyl-[ACP] + CO2 + CoA. It functions in the pathway lipid metabolism; fatty acid biosynthesis. In terms of biological role, catalyzes the condensation reaction of fatty acid synthesis by the addition to an acyl acceptor of two carbons from malonyl-ACP. Catalyzes the first condensation reaction which initiates fatty acid synthesis and may therefore play a role in governing the total rate of fatty acid production. Possesses both acetoacetyl-ACP synthase and acetyl transacylase activities. Its substrate specificity determines the biosynthesis of branched-chain and/or straight-chain of fatty acids. The polypeptide is Beta-ketoacyl-[acyl-carrier-protein] synthase III (Anaplasma marginale (strain St. Maries)).